Consider the following 258-residue polypeptide: Uroplakin-1a (258 aa).

Over 1–14 (MASAAAAEAEKGSP) the chain is Cytoplasmic. Residues 15–35 (VVVGLLVVGNIIILLSGLSLF) traverse the membrane as a helical segment. At 36 to 59 (AETIWVTADQYRVYPLMGVSGKDD) the chain is on the extracellular side. The chain crosses the membrane as a helical span at residues 60 to 86 (VFAGAWIAIFCGFSFFMVASFGVGAAL). Topologically, residues 87–91 (CRRRS) are cytoplasmic. The helical transmembrane segment at 92–112 (MVLTYLVLMLIVYIFECASCI) threads the bilayer. The Extracellular segment spans residues 113-230 (TSYTHRDYMV…HIGHAIDSYT (118 aa)). A glycan (N-linked (GlcNAc...) asparagine) is linked at N170. The chain crosses the membrane as a helical span at residues 231 to 252 (WGISWFGFAILMWTLPVMLIAM). Residues 253-258 (YFYTML) lie on the Cytoplasmic side of the membrane.

The protein belongs to the tetraspanin (TM4SF) family. In terms of assembly, homodimer; disulfide-linked. Interacts with uroplakin-2 (UPK2). As to expression, high expression restricted to ureteric urothelium (most superficial cells); low expression in prostate. Expression in normal urothelial cells is lost in culture. Some expression in tumor cell lines derived from urothelial malignancies.

It localises to the membrane. Component of the asymmetric unit membrane (AUM); a highly specialized biomembrane elaborated by terminally differentiated urothelial cells. May play an important role in normal bladder epithelial physiology, possibly in regulating membrane permeability of superficial umbrella cells or in stabilizing the apical membrane through AUM/cytoskeletal interactions. In Homo sapiens (Human), this protein is Uroplakin-1a (UPK1A).